We begin with the raw amino-acid sequence, 466 residues long: Magnetosome-associated protein MamJ (466 aa).

2 disordered regions span residues 1-23 and 60-80; these read MAKN…ISTG and ANQG…RSQD. Residues 1 to 24 form a not required to restore magnetic response to deletion mutant region; it reads MAKNRRDRGTDLPGDGDQKISTGP. Residues 25–80 are required to restore magnetic response to deletion mutant; the sequence is EIVSVTVHPSPNLAAAAKPVQGDIWASLLESSPWSANQGGLVETAQPPSAPIRSQD. Tandem repeat unit repeat units lie at residues 81–168 and 169–256; these read PVPV…VEPE and PAPV…VEPE. Not required to restore magnetic response to deletion mutant regions lie at residues 81-256, 136-334, 333-374, and 432-466; these read PVPV…VEPE, ETDA…SQAE, AESV…AVEA, and VGSN…DKNK. 3 Glu-Pro-rich motif repeats span residues 145–164, 233–252, and 253–272; these read IEPE…EAAE and VEPE…EAAE. Required to restore magnetic response to deletion mutant stretches follow at residues 375 to 432 and 426 to 466; these read TRQP…GRLV and VKGG…DKNK.

It belongs to the magnetosome MamJ protein family. Forms homooligomers. Interacts with MamK. Identified by N-terminal sequencing of a protein that is about 96 kDa in size. The protein runs anomalously on protein gels.

It localises to the magnetosome. Required for assembly of magnetosome chains. Regulates the dynamic behavior of MamK filaments. May connect magnetosomes to MamK filaments. Moves from the cell poles towards midcell; movement does not depend on the treadmilling ability of MamK, suggesting MamJ associates and disassociates continuously from the MamK filament. The sequence is that of Magnetosome-associated protein MamJ from Magnetospirillum gryphiswaldense (strain DSM 6361 / JCM 21280 / NBRC 15271 / MSR-1).